A 279-amino-acid chain; its full sequence is Ethanolamine utilization protein EutJ (279 aa).

It belongs to the EutJ family.

The protein operates within amine and polyamine degradation; ethanolamine degradation. In terms of biological role, may protect ethanolamine ammonia-lyase (EAL, eutB-eutC) from inhibition, may function in assembling the bacterial microcompartment and/or in refolding EAL, suggesting it may have chaperone activity. Overexpression of eutJ and eutS in E.coli leads to multiple BMC-like structures; eutS expression alone leads to 1 BMC-like structure per cell. Expression of the eut operon allows this bacteria to use ethanolamine (EA) as a carbon, nitrogen and energy source. It relies on cobalamin (vitamin B12) both as a cofactor for the ethanolamine ammonia-lyase (EAL) activity and to induce the operon. EA enhances bacterial survival in macrophages in a concentration-dependent manner, suggesting it is an important nutrient during infection. This Salmonella typhimurium (strain LT2 / SGSC1412 / ATCC 700720) protein is Ethanolamine utilization protein EutJ.